A 498-amino-acid chain; its full sequence is Probable cytosol aminopeptidase (498 aa).

Mn(2+) contacts are provided by lysine 264 and aspartate 269. Lysine 276 is a catalytic residue. Mn(2+)-binding residues include aspartate 287, aspartate 346, and glutamate 348. Arginine 350 is a catalytic residue.

Belongs to the peptidase M17 family. Mn(2+) is required as a cofactor.

The protein localises to the cytoplasm. It catalyses the reaction Release of an N-terminal amino acid, Xaa-|-Yaa-, in which Xaa is preferably Leu, but may be other amino acids including Pro although not Arg or Lys, and Yaa may be Pro. Amino acid amides and methyl esters are also readily hydrolyzed, but rates on arylamides are exceedingly low.. The enzyme catalyses Release of an N-terminal amino acid, preferentially leucine, but not glutamic or aspartic acids.. Functionally, presumably involved in the processing and regular turnover of intracellular proteins. Catalyzes the removal of unsubstituted N-terminal amino acids from various peptides. This Brucella anthropi (strain ATCC 49188 / DSM 6882 / CCUG 24695 / JCM 21032 / LMG 3331 / NBRC 15819 / NCTC 12168 / Alc 37) (Ochrobactrum anthropi) protein is Probable cytosol aminopeptidase.